We begin with the raw amino-acid sequence, 339 residues long: DNA-directed RNA polymerase subunit alpha (339 aa).

Positions 1–238 (MVDPIVTKNW…EQLSIFINFD (238 aa)) are alpha N-terminal domain (alpha-NTD). The alpha C-terminal domain (alpha-CTD) stretch occupies residues 255 to 339 (LNENLFRSVD…KAAPQGAPKV (85 aa)).

Belongs to the RNA polymerase alpha chain family. In terms of assembly, homodimer. The RNAP catalytic core consists of 2 alpha, 1 beta, 1 beta' and 1 omega subunit. When a sigma factor is associated with the core the holoenzyme is formed, which can initiate transcription.

It catalyses the reaction RNA(n) + a ribonucleoside 5'-triphosphate = RNA(n+1) + diphosphate. In terms of biological role, DNA-dependent RNA polymerase catalyzes the transcription of DNA into RNA using the four ribonucleoside triphosphates as substrates. The protein is DNA-directed RNA polymerase subunit alpha of Anaeromyxobacter sp. (strain Fw109-5).